Consider the following 821-residue polypeptide: MATSEEPSTDASIICYAPSMITTNGVWQGDNPLDFSLPLFVLQLTLVVVVTRFFVFILKPFRQPRVISEILGGIVLGPSVLGRSTKFAHTIFPQRSVMVLETMANVGLLYFLFLVGVEMDIMVVRKTGKRALTIAIGGMVLPFLIGAAFSFSMHRSEDHLGQGTYILFLGVALSVTAFPVLARILAELKLINTEIGRISMSAALVNDMFAWILLALAIALAESDKTSFASLWVMISSAVFIAVCVFVVRPGIAWIIRKTPEGENFSEFHICLILTGVMISGFITDAIGTHSVFGAFVFGLVIPNGPLGLTLIEKLEDFVSGLLLPLFFAISGLKTNIAAIQGPATWLTLFLVIFLACAGKVIGTVIVAFFHGMPVREGITLGLLLNTKGLVEMIVLNVGKDQKVLDDETFATMVLVALVMTGVITPIVTILYKPVKKSVSYKRRTIQQTKPDSELRVLVCVHTPRNVPTIINLLEASHPTKRSPICIYVLHLVELTGRASAMLIVHNTRKSGRPALNRTQAQSDHIINAFENYEQHAAFVAVQPLTAISPYSTMHEDVCSLAEDKRVSFIIIPFHKQQTVDGGMESTNPAYRLVNQNLLENSPCSVGILVDRGLNGATRLNSNTVSLQVAVLFFGGPDDREALAYAWRMAQHPGITLTVLRFIHDEDEADTASTRATNDSDLKIPKMDHRKQRQLDDDYINLFRAENAEYESIVYIEKLVSNGEETVAAVRSMDSSHDLFIVGRGEGMSSPLTAGLTDWSECPELGAIGDLLASSDFAATVSVLVVQQYVGSWAQEDDMDFPESPVHSHETKVTYGLENPR.

Helical transmembrane passes span 37 to 57 (LPLFVLQLTLVVVVTRFFVFI), 65 to 82 (RVISEILGGIVLGPSVLG), 97 to 117 (VMVLETMANVGLLYFLFLVGV), 131 to 151 (ALTIAIGGMVLPFLIGAAFSF), 166 to 186 (ILFLGVALSVTAFPVLARILA), 200 to 220 (MSAALVNDMFAWILLALAIAL), 228 to 248 (FASLWVMISSAVFIAVCVFVV), 268 to 288 (FHICLILTGVMISGFITDAIG), 292 to 312 (VFGAFVFGLVIPNGPLGLTLI), 318 to 338 (FVSGLLLPLFFAISGLKTNIA), 350 to 370 (FLVIFLACAGKVIGTVIVAFF), 378 to 398 (GITLGLLLNTKGLVEMIVLNV), and 410 to 430 (FATMVLVALVMTGVITPIVTI). Residues 800–821 (DFPESPVHSHETKVTYGLENPR) form a disordered region.

This sequence belongs to the monovalent cation:proton antiporter 2 (CPA2) transporter (TC 2.A.37) family. CHX (TC 2.A.37.4) subfamily. In terms of tissue distribution, specifically expressed in pollen.

Its subcellular location is the membrane. Functionally, may operate as a cation/H(+) antiporter. This chain is Cation/H(+) antiporter 15 (CHX15), found in Arabidopsis thaliana (Mouse-ear cress).